We begin with the raw amino-acid sequence, 192 residues long: Der GTPase-activating protein YihI (192 aa).

Residues 1 to 80 (MSRTKKTRRI…KAAVKEVKDP (80 aa)) are disordered. Composition is skewed to basic and acidic residues over residues 9-25 (RITD…KPEQ), 37-48 (TRYELDAKAREE), and 65-80 (DPAE…VKDP).

The protein belongs to the YihI family. In terms of assembly, interacts with Der.

In terms of biological role, a GTPase-activating protein (GAP) that modifies Der/EngA GTPase function. May play a role in ribosome biogenesis. The protein is Der GTPase-activating protein YihI of Actinobacillus pleuropneumoniae serotype 5b (strain L20).